The chain runs to 125 residues: UPF0332 protein AF_0298 (125 aa).

It belongs to the UPF0332 family.

The chain is UPF0332 protein AF_0298 from Archaeoglobus fulgidus (strain ATCC 49558 / DSM 4304 / JCM 9628 / NBRC 100126 / VC-16).